Reading from the N-terminus, the 872-residue chain is Alanine--tRNA ligase (872 aa).

The Zn(2+) site is built by His-567, His-571, Cys-669, and His-673.

Belongs to the class-II aminoacyl-tRNA synthetase family. Zn(2+) serves as cofactor.

Its subcellular location is the cytoplasm. The catalysed reaction is tRNA(Ala) + L-alanine + ATP = L-alanyl-tRNA(Ala) + AMP + diphosphate. Functionally, catalyzes the attachment of alanine to tRNA(Ala) in a two-step reaction: alanine is first activated by ATP to form Ala-AMP and then transferred to the acceptor end of tRNA(Ala). Also edits incorrectly charged Ser-tRNA(Ala) and Gly-tRNA(Ala) via its editing domain. In Streptococcus thermophilus (strain CNRZ 1066), this protein is Alanine--tRNA ligase.